Consider the following 238-residue polypeptide: ATP synthase subunit a (238 aa).

Helical transmembrane passes span 15-35, 76-96, 111-131, 167-187, and 208-230; these read IFNLTMLAMTLLIVGVIFVFI, YSLFFLCLFLFMVIANNLGLM, PTANLQYDLTLSFLVILLTHI, LALRIFGNIFAGEVMTSLLLL, and AFSVFISCIQAYVFTLLTSVYLG.

This sequence belongs to the ATPase A chain family. As to quaternary structure, F-type ATPases have 2 components, CF(1) - the catalytic core - and CF(0) - the membrane proton channel. CF(1) has five subunits: alpha(3), beta(3), gamma(1), delta(1), epsilon(1). CF(0) has three main subunits: a(1), b(2) and c(9-12). The alpha and beta chains form an alternating ring which encloses part of the gamma chain. CF(1) is attached to CF(0) by a central stalk formed by the gamma and epsilon chains, while a peripheral stalk is formed by the delta and b chains.

It localises to the cell membrane. Functionally, key component of the proton channel; it plays a direct role in the translocation of protons across the membrane. In Streptococcus pneumoniae (strain 70585), this protein is ATP synthase subunit a.